A 283-amino-acid chain; its full sequence is Thymidylate synthase (283 aa).

Arginine 22 serves as a coordination point for dUMP. Cysteine 160 serves as the catalytic Nucleophile. Residues 180-183 (RSCD), asparagine 191, and 221-223 (HIY) each bind dUMP. Aspartate 183 lines the (6R)-5,10-methylene-5,6,7,8-tetrahydrofolate pocket. Alanine 282 is a (6R)-5,10-methylene-5,6,7,8-tetrahydrofolate binding site.

It belongs to the thymidylate synthase family. Bacterial-type ThyA subfamily. Homodimer.

The protein localises to the cytoplasm. The enzyme catalyses dUMP + (6R)-5,10-methylene-5,6,7,8-tetrahydrofolate = 7,8-dihydrofolate + dTMP. The protein operates within pyrimidine metabolism; dTTP biosynthesis. Functionally, catalyzes the reductive methylation of 2'-deoxyuridine-5'-monophosphate (dUMP) to 2'-deoxythymidine-5'-monophosphate (dTMP) while utilizing 5,10-methylenetetrahydrofolate (mTHF) as the methyl donor and reductant in the reaction, yielding dihydrofolate (DHF) as a by-product. This enzymatic reaction provides an intracellular de novo source of dTMP, an essential precursor for DNA biosynthesis. This Shewanella frigidimarina (strain NCIMB 400) protein is Thymidylate synthase.